The following is a 460-amino-acid chain: Bifunctional protein GlmU (460 aa).

The interval 1-229 (MTNYAIILAA…FNESLGVNDR (229 aa)) is pyrophosphorylase. Residues 8–11 (LAAG), lysine 22, glutamine 72, and 77–78 (GT) each bind UDP-N-acetyl-alpha-D-glucosamine. Mg(2+) is bound at residue aspartate 102. Residues glycine 139, glutamate 154, asparagine 169, and asparagine 227 each contribute to the UDP-N-acetyl-alpha-D-glucosamine site. Asparagine 227 is a binding site for Mg(2+). The interval 230–250 (VALATAETVMRQRITQKHMVN) is linker. The N-acetyltransferase stretch occupies residues 251 to 460 (GVTFHNPETV…RLAHHPSRSK (210 aa)). UDP-N-acetyl-alpha-D-glucosamine is bound by residues arginine 332 and lysine 350. The active-site Proton acceptor is the histidine 362. Residues tyrosine 365 and asparagine 376 each contribute to the UDP-N-acetyl-alpha-D-glucosamine site. Residues alanine 379, 385–386 (NY), serine 404, alanine 422, and arginine 439 each bind acetyl-CoA.

This sequence in the N-terminal section; belongs to the N-acetylglucosamine-1-phosphate uridyltransferase family. It in the C-terminal section; belongs to the transferase hexapeptide repeat family. As to quaternary structure, homotrimer. Mg(2+) is required as a cofactor.

Its subcellular location is the cytoplasm. The enzyme catalyses alpha-D-glucosamine 1-phosphate + acetyl-CoA = N-acetyl-alpha-D-glucosamine 1-phosphate + CoA + H(+). It carries out the reaction N-acetyl-alpha-D-glucosamine 1-phosphate + UTP + H(+) = UDP-N-acetyl-alpha-D-glucosamine + diphosphate. The protein operates within nucleotide-sugar biosynthesis; UDP-N-acetyl-alpha-D-glucosamine biosynthesis; N-acetyl-alpha-D-glucosamine 1-phosphate from alpha-D-glucosamine 6-phosphate (route II): step 2/2. Its pathway is nucleotide-sugar biosynthesis; UDP-N-acetyl-alpha-D-glucosamine biosynthesis; UDP-N-acetyl-alpha-D-glucosamine from N-acetyl-alpha-D-glucosamine 1-phosphate: step 1/1. It participates in bacterial outer membrane biogenesis; LPS lipid A biosynthesis. Catalyzes the last two sequential reactions in the de novo biosynthetic pathway for UDP-N-acetylglucosamine (UDP-GlcNAc). The C-terminal domain catalyzes the transfer of acetyl group from acetyl coenzyme A to glucosamine-1-phosphate (GlcN-1-P) to produce N-acetylglucosamine-1-phosphate (GlcNAc-1-P), which is converted into UDP-GlcNAc by the transfer of uridine 5-monophosphate (from uridine 5-triphosphate), a reaction catalyzed by the N-terminal domain. This Streptococcus pyogenes serotype M49 (strain NZ131) protein is Bifunctional protein GlmU.